A 222-amino-acid chain; its full sequence is Phosphoribosylformylglycinamidine synthase subunit PurQ (222 aa).

The Glutamine amidotransferase type-1 domain occupies 2–222 (KAAVITFPGS…RALLGGMALV (221 aa)). Cys86 acts as the Nucleophile in catalysis. Residues His194 and Glu196 contribute to the active site.

In terms of assembly, part of the FGAM synthase complex composed of 1 PurL, 1 PurQ and 2 PurS subunits.

The protein resides in the cytoplasm. The catalysed reaction is N(2)-formyl-N(1)-(5-phospho-beta-D-ribosyl)glycinamide + L-glutamine + ATP + H2O = 2-formamido-N(1)-(5-O-phospho-beta-D-ribosyl)acetamidine + L-glutamate + ADP + phosphate + H(+). It carries out the reaction L-glutamine + H2O = L-glutamate + NH4(+). It functions in the pathway purine metabolism; IMP biosynthesis via de novo pathway; 5-amino-1-(5-phospho-D-ribosyl)imidazole from N(2)-formyl-N(1)-(5-phospho-D-ribosyl)glycinamide: step 1/2. Part of the phosphoribosylformylglycinamidine synthase complex involved in the purines biosynthetic pathway. Catalyzes the ATP-dependent conversion of formylglycinamide ribonucleotide (FGAR) and glutamine to yield formylglycinamidine ribonucleotide (FGAM) and glutamate. The FGAM synthase complex is composed of three subunits. PurQ produces an ammonia molecule by converting glutamine to glutamate. PurL transfers the ammonia molecule to FGAR to form FGAM in an ATP-dependent manner. PurS interacts with PurQ and PurL and is thought to assist in the transfer of the ammonia molecule from PurQ to PurL. The protein is Phosphoribosylformylglycinamidine synthase subunit PurQ of Cereibacter sphaeroides (strain ATCC 17023 / DSM 158 / JCM 6121 / CCUG 31486 / LMG 2827 / NBRC 12203 / NCIMB 8253 / ATH 2.4.1.) (Rhodobacter sphaeroides).